The following is a 189-amino-acid chain: Apolipoprotein D (189 aa).

Residues 1 to 20 (MVMLLLLLSALAGLFGAAEG) form the signal peptide. The residue at position 21 (Gln21) is a Pyrrolidone carboxylic acid. Disulfide bonds link Cys28/Cys134 and Cys61/Cys185. 2 N-linked (GlcNAc...) asparagine glycosylation sites follow: Asn65 and Asn98.

The protein belongs to the calycin superfamily. Lipocalin family. Homodimer.

The protein localises to the secreted. Functionally, APOD occurs in the macromolecular complex with lecithin-cholesterol acyltransferase. It is probably involved in the transport and binding of bilin. Appears to be able to transport a variety of ligands in a number of different contexts. In Macaca fascicularis (Crab-eating macaque), this protein is Apolipoprotein D (APOD).